The chain runs to 201 residues: Recombination protein RecR (201 aa).

The C4-type zinc finger occupies 59–74 (CEICGNMDTENMCRIC). The Toprim domain occupies 82 to 177 (SIIAIVETVA…KISRLASGIP (96 aa)).

It belongs to the RecR family.

May play a role in DNA repair. It seems to be involved in an RecBC-independent recombinational process of DNA repair. It may act with RecF and RecO. The protein is Recombination protein RecR of Rickettsia africae (strain ESF-5).